The sequence spans 97 residues: Small cell adhesion glycoprotein (97 aa).

Residues 1 to 36 lie on the Extracellular side of the membrane; sequence MNNLPATPSPEELMTTPVFQAPETMSPQAEEASTAL. Thr7 carries an O-linked (GalNAc...) threonine glycan. Ser9 carries an O-linked (GalNAc...) serine glycan. Residues Thr15, Thr16, and Thr24 are each glycosylated (O-linked (GalNAc...) threonine). Residue Ser26 is glycosylated (O-linked (GalNAc...) serine). Residues 37–57 traverse the membrane as a helical; Signal-anchor for type III membrane protein segment; the sequence is IAVVITVVFLTLLSVVTLIFF. Residues 58–97 are Cytoplasmic-facing; that stretch reads YLYKNKGSYVTYEPAEGEPSAILQMETDSAKGKEKEEYFI.

The protein belongs to the SMAGP family. In terms of processing, O-glycosylated. The O-glycan is modified with sialic acid residues. As to expression, detected in brain (at protein level). Highly expressed in kidney and placenta. Detected in skin, breast, heart, lung, liver, prostate, spleen, small intestine, colon and stomach.

The protein localises to the cell membrane. It is found in the cytoplasmic vesicle membrane. May play a role in epithelial cell-cell contacts. May play a role in tumor invasiveness and metastasis formation. The chain is Small cell adhesion glycoprotein (Smagp) from Rattus norvegicus (Rat).